The primary structure comprises 407 residues: Transcriptional regulator UL34 (407 aa).

Positions 268–330 are disordered; it reads AAGPPEADEN…ENEEEEEELF (63 aa). Residues 273-286 show a composition bias toward acidic residues; that stretch reads EADENNDEGEEDDD. Residues 287–301 are compositionally biased toward basic and acidic residues; it reads ELRHSDPAPLHDSKK. Basic residues predominate over residues 302-312; the sequence is PRNARRPRTRV.

This sequence belongs to the HHV-5 UL34 protein family.

It is found in the host nucleus. Acts as a transcriptional repressor of the US3 gene expression through a specific DNA sequence named the transcriptional repressive element (tre). The chain is Transcriptional regulator UL34 (UL34) from Homo sapiens (Human).